Here is a 118-residue protein sequence, read N- to C-terminus: Melanoma antigen recognized by T-cells 1 (118 aa).

Residues 27–47 (AAGIGILTVILGVLLLIGCWY) traverse the membrane as a helical segment. The Cytoplasmic portion of the chain corresponds to 48 to 118 (CRRRNGYRAL…AEQSPPPYSP (71 aa)). The segment at 78–118 (GFDHRDSKVSLQEKNCEPVVPNAPPAYEKLSAEQSPPPYSP) is disordered. Residue Ser108 is modified to Phosphoserine.

Interacts with PMEL. Interacts with GPR143. Post-translationally, acylated. Expression is restricted to melanoma and melanocyte cell lines and retina.

It is found in the endoplasmic reticulum membrane. Its subcellular location is the golgi apparatus. It localises to the trans-Golgi network membrane. The protein localises to the melanosome. Its function is as follows. Involved in melanosome biogenesis by ensuring the stability of GPR143. Plays a vital role in the expression, stability, trafficking, and processing of melanocyte protein PMEL, which is critical to the formation of stage II melanosomes. The chain is Melanoma antigen recognized by T-cells 1 (MLANA) from Homo sapiens (Human).